A 1321-amino-acid chain; its full sequence is Serine/threonine-protein kinase SIK3 (1321 aa).

Residues 1-59 (MAAAAASGAGGAAGAGTGGAGPAGRLLPPPAPGSPAAPAAVSPAAGQPRPPAPASRGPM) form a disordered region. Over residues 8 to 22 (GAGGAAGAGTGGAGP) the composition is skewed to gly residues. Low complexity predominate over residues 36 to 47 (AAPAAVSPAAGQ). The Protein kinase domain maps to 66-317 (YEIDRTIGKG…MEQICKHKWM (252 aa)). Position 71 is a phosphothreonine (threonine 71). Residues 72-80 (IGKGNFAVV) and lysine 95 each bind ATP. Glutamate 113 is modified (phosphothreonine). The Proton acceptor role is filled by aspartate 188. Threonine 221 bears the Phosphothreonine; by LKB1 mark. In terms of domain architecture, UBA spans 344 to 384 (PLNEDVLLAMEDMGLDKEQTLQSLRSDAYDHYSAIYSLLCD). Position 469 is a phosphothreonine (threonine 469). Residues serine 551, serine 591, and serine 592 each carry the phosphoserine modification. A disordered region spans residues 585–614 (TPVDEESSDGEPDQEAVQSSTYKDSNTLHL). Over residues 587–598 (VDEESSDGEPDQ) the composition is skewed to acidic residues. Positions 600–613 (AVQSSTYKDSNTLH) are enriched in polar residues. Phosphoserine occurs at positions 626 and 647. Residues 727 to 772 (IQPSSPPPNHPNNHLFRQPSNSPPPMSSAMIQPHGAASSSQFQGLP) are disordered. Positions 763 to 772 (ASSSQFQGLP) are enriched in polar residues. Serine 866 carries the post-translational modification Phosphoserine. The segment at 894–945 (LFSDQSRGSPSSYSPSTGVGFSPTQALKVPPLDQFPTFPPSAHQQPPHYTTS) is disordered. Low complexity predominate over residues 896–909 (SDQSRGSPSSYSPS). Residues 935-945 (AHQQPPHYTTS) are compositionally biased toward polar residues. A Phosphoserine modification is found at serine 978. At arginine 986 the chain carries Omega-N-methylarginine. Over residues 1256–1265 (SLMGSQQFQD) the composition is skewed to polar residues. Residues 1256–1289 (SLMGSQQFQDGENEECGASLGGHEHPDLSDGSQH) form a disordered region.

This sequence belongs to the protein kinase superfamily. CAMK Ser/Thr protein kinase family. SNF1 subfamily. Binds to and is activated by YWHAZ when phosphorylated on Thr-221. Interacts with 14-3-3 proteins. Interacts with HDAC4; this interaction leads to HDAC4 retention in the cytoplasm. Interacts with DEPTOR, MLST8/GbetaL, RICTOR and RPTOR. Mg(2+) serves as cofactor. Post-translationally, phosphorylated at Thr-221 by STK11/LKB1 in complex with STE20-related adapter-alpha (STRADA) pseudo kinase and CAB39. Phosphorylation at Thr-221 is inhibited in response to PTHLH/PTHrP. Phosphorylated at Thr-469 and Ser-551 in response to cAMP signaling. Expressed in chondrocytes.

Its subcellular location is the cytoplasm. It carries out the reaction L-seryl-[protein] + ATP = O-phospho-L-seryl-[protein] + ADP + H(+). The catalysed reaction is L-threonyl-[protein] + ATP = O-phospho-L-threonyl-[protein] + ADP + H(+). Activated by phosphorylation on Thr-221. Its function is as follows. Positive regulator of mTOR signaling that functions by triggering the degradation of DEPTOR, an mTOR inhibitor. Involved in the dynamic regulation of mTOR signaling in chondrocyte differentiation during skeletogenesis. Negatively regulates cAMP signaling pathway possibly by acting on CRTC2/TORC2 and CRTC3/TORC3. Prevents HDAC4 translocation to the nucleus. In Homo sapiens (Human), this protein is Serine/threonine-protein kinase SIK3.